Reading from the N-terminus, the 1696-residue chain is MEPAAAAPAQRLADPTGEDRAPAAAAAAEGGRSPDSVLSAAAPSGGNGGAAREEAPCEAPPGPLPGRAGGTGRRRRRGVPQPAAGGAAPVTAAGGGANSLLLRRGRLKRNLSAAASSSSSPSSASSAAGGLPASCSASASLCTRSLDRKTLLQKHRQLLQLQPSDRDWVRHQLQRGCVHVFDRHMASSYLRPVLCTLDTTAAEVAARLLQLGHKGGGVVKVLGHGPPPAAAPAASDQTPATELGRDVEPPPSSSTVGAVRGPARAPPADLPLPGGAWTRCAPRVNPAPSDSSPGELFAGGPCSPSRAPRPASDTESFSLSPSAESVSDRLDPYSSGGGSSSSSEELEADPATVLTGPSGPPHHPVRSSQPRPPSPKTSALLQPKAPTGVDGTGLVVGEGPGDDKAVAAAAPGVPLWTPGRIRETVQKTSSPPSLYVQLHGETTRRLEADEKPLQIQNDYLFQLGFGELWRVQEEGMDSEIGCLIRFYAGKPHSTGSSERIQLSGMYNVRKGKMQLPVNRWTRRQVILCGTCLIVSSVKDSSSGKMHVLPLIGGKVEEVKKHQHCLAFSSSGPQSQTYYICFDTFTEYLRWLRQVSKVASQRISSVDLSCCSLEHLPANLFYSQDLTHLNLKQNFLRQNPSLPAARGLGELQRFTKLKSLNLSNNHLGAFPSAVCSIPTLAELNVSCNALQEVPAAVGAMQNLQTFLLDGNFLQSLPAELENMHQLSYLGLSFNEFTDIPEVLEKLTAVDKLCMAGNCMETLRLQALRRMPHIKHVDLRLNILRKLITDEVDFLQHVTQLDLRDNKLGDLDAMIFNNIEVLHCERNQLVTLNICGYFLKALYASSNELVQLDVYPVPNYLSYMDVSRNCLESVPEWVCESRKLEVLDIGHNQICELPARLFCNSSLRKLLAGHNRLARLPERLERTSVEVLDVQHNQIIELPPNLLMKADSLRFLNASANKLETLPPATLSEETSSILQELYLTNNSLTDKCVPLLTGHPRLKILHMAYNRLQSFPASKMAKLEELEEIDISGNKLKAIPTTIMNCRRMHTVIAHSNCIEVFPEVMQLPEVKCVDLSCNELSEITLPENLPPKLQELDLTGNPRLALDHKSLELLNNIRCFKIDQPSAGDASGAPAVWSHGYTEASGVKNKLCVAALSVNNFRDNREALYGVFDGDRNVEVPYLLQCTMSDILAEELQKTKNEEEYMVNTFIVMQRKLGTAGQKLGGAAVLCHIRHDPVDLGGSFTLTSANVGKCQTVLCRNGKPLSLSRSYTMSCEEERKRIKQHKAIITEDGKVNGVTESTRILGYTFLHPSVVPRPHVQSVLLTPQDEFFILGSKGLWDSLSIEEAVEAVRNVPDALAAAKKLCTLAQSYGCHDSISAVVVQLSVTEDSFCCCELSVGGSMPPPSPGIFPPSVSMVIKDRPSDGLGVPSSSSGMASEISSELSTSEMSSEVGSTASDEPPSGALSESSPAYPSEQRCMLHPVCLSNSFQRQLSSATFSSAFSDNGLDSDDEEPIEGVFSNGSRVEVEVDIHCSRAKEKERQQHLLQVPAEASDEGIVISANEDESGLSKKTDISAVGTIGRRRANGSVPPQERSHNVIEVATDAPLRKPGGYFAAPAQPDPDDQFIIPPELEEEVKEIMKHHQEQQQQQQQQQQQQQQQPPPPPQPPQAQAQAQAQAQRPFQMDHLPDCYDTPL.

N-acetylmethionine is present on methionine 1. Disordered regions lie at residues 1–97 and 222–398; these read MEPA…GGGA and LGHG…VVGE. Over residues 79-92 the composition is skewed to low complexity; sequence VPQPAAGGAAPVTA. The segment covering 313 to 325 has biased composition (polar residues); it reads DTESFSLSPSAES. Serine 378 bears the Phosphoserine mark. One can recognise a PH domain in the interval 499–599; that stretch reads RIQLSGMYNV…WLRQVSKVAS (101 aa). LRR repeat units lie at residues 601 to 622, 624 to 645, 655 to 676, 678 to 699, 701 to 722, 724 to 746, 836 to 857, 858 to 879, 881 to 902, 904 to 925, 926 to 947, 950 to 971, 976 to 996, 1000 to 1021, 1024 to 1045, 1047 to 1068, 1069 to 1090, and 1092 to 1113; these read RISS…LFYS, DLTH…PAAR, KLKS…VCSI, TLAE…VGAM, NLQT…LENM, QLSY…EKLT, FLKA…PVPN, YLSY…VCES, KLEV…LFCN, SLRK…LERT, SVEV…LLMK, SLRF…TLSE, ILQE…PLLT, RLKI…KMAK, ELEE…IMNC, RMHT…MQLP, EVKC…ENLP, and KLQE…SLEL. In terms of domain architecture, PPM-type phosphatase spans 1138–1385; sequence SHGYTEASGV…DSISAVVVQL (248 aa). Residues aspartate 1173, glycine 1174, lysine 1337, and aspartate 1376 each contribute to the Mn(2+) site. Disordered stretches follow at residues 1422 to 1473 and 1610 to 1696; these read RPSD…SPAY and KPGG…DTPL. Composition is skewed to low complexity over residues 1431–1452, 1647–1660, and 1670–1680; these read SSSS…MSSE, QQQQ…QQQQ, and QAQAQAQAQAQ. The PDZ-binding signature appears at 1694–1696; sequence TPL.

Interacts with the nucleotide free form of K-Ras (KRAS) via its LRR repeats. Interacts with AKT2, AKT3 and PRKCB isoform beta-II. Interacts with WDR48 and USP12. It depends on Mn(2+) as a cofactor. As to expression, mainly present in brain (at protein level). Isoform 2 is more abundant in adult brain neurons than isoform 1 in. Isoforms 1 and 2 are expressed in the retina but not found in rod outer segments.

It is found in the cytoplasm. The protein resides in the membrane. It localises to the cell membrane. The protein localises to the nucleus. Its subcellular location is the nucleoplasm. It is found in the nucleus membrane. The catalysed reaction is O-phospho-L-seryl-[protein] + H2O = L-seryl-[protein] + phosphate. It carries out the reaction O-phospho-L-threonyl-[protein] + H2O = L-threonyl-[protein] + phosphate. Its activity is regulated as follows. Insensitive to okadaic acid. Deubiquitination by WDR48-USP12 complex positively regulates PHLPP1 stability. In terms of biological role, protein phosphatase involved in regulation of Akt and PKC signaling. Mediates dephosphorylation in the C-terminal domain hydrophobic motif of members of the AGC Ser/Thr protein kinase family; specifically acts on 'Ser-473' of AKT2 and AKT3, 'Ser-660' of PRKCB and 'Ser-657' of PRKCA. Isoform 2 seems to have a major role in regulating Akt signaling in hippocampal neurons while isoform 1 may promote Akt and PKC activation and inhibit ERK signaling. Akt regulates the balance between cell survival and apoptosis through a cascade that primarily alters the function of transcription factors that regulate pro- and antiapoptotic genes. Dephosphorylation of 'Ser-473' of Akt triggers apoptosis and suppression of tumor growth. Dephosphorylation of PRKCA and PRKCB leads to their destabilization and degradation. Dephosphorylates STK4 on 'Thr-387' leading to STK4 activation and apoptosis. Dephosphorylates RPS6KB1 and is involved in regulation of cap-dependent translation. Inhibits cancer cell proliferation and may act as a tumor suppressor. Dephosphorylates RAF1 inhibiting its kinase activity. May act as a negative regulator of K-Ras signaling in membrane rafts. Involved in the hippocampus-dependent long-term memory formation. Involved in circadian control by regulating the consolidation of circadian periodicity after resetting. Involved in development and function of regulatory T-cells. The protein is PH domain leucine-rich repeat protein phosphatase 1 (Phlpp1) of Rattus norvegicus (Rat).